Consider the following 171-residue polypeptide: Ribosome maturation factor RimM (171 aa).

The PRC barrel domain maps to 97 to 169 (DGEFYYHEII…RVDVDIMEGL (73 aa)).

It belongs to the RimM family. Binds ribosomal protein uS19.

Its subcellular location is the cytoplasm. Its function is as follows. An accessory protein needed during the final step in the assembly of 30S ribosomal subunit, possibly for assembly of the head region. Essential for efficient processing of 16S rRNA. May be needed both before and after RbfA during the maturation of 16S rRNA. It has affinity for free ribosomal 30S subunits but not for 70S ribosomes. This chain is Ribosome maturation factor RimM, found in Lactococcus lactis subsp. cremoris (strain MG1363).